A 322-amino-acid polypeptide reads, in one-letter code: p55-v-Fos-transforming protein (322 aa).

The interval 69 to 95 is disordered; sequence APGGRGQSIGRRGKVEQLSPEEEEKRR. The bZIP domain maps to 91-154; the sequence is EEKRRIRRER…EKLEFILAAH (64 aa). The interval 93–113 is basic motif; that stretch reads KRRIRRERNKMAAAKCRNRRR. The interval 119–147 is leucine-zipper; the sequence is LQAETDQLEEEKSALQAEIANLLKEKEKL. Positions 298-322 are disordered; it reads AAHRKGSSSNEPSSDSLSSPTLLAL. Residues 304–316 show a composition bias toward low complexity; the sequence is SSSNEPSSDSLSS.

This sequence belongs to the bZIP family. Fos subfamily.

The protein localises to the host nucleus. This is p55-v-Fos-transforming protein (V-FOS) from Galliformes.